The following is a 193-amino-acid chain: MYQDLIRSELNEAADTLAKFLSDDANIEAIQKAAVLLADSFKVGGKVLSCGNGGSHCDAMHFAEELTGRYRENRPGYPAIAISDVSHLSCVSNDFGYEFVFSRYIEAVGKEGDVLLGISTSGNSGNIIKAVEAARLKGMKVITLTGKDGGKMAGTADVEIRVPHFGYADRIQEIHIKVIHILIQLIEKEMVKA.

The SIS domain occupies 37–193 (LADSFKVGGK…QLIEKEMVKA (157 aa)). Residue 52 to 54 (NGG) participates in substrate binding. Zn(2+)-binding residues include His-61 and Glu-65. Substrate contacts are provided by residues Glu-65, 93 to 94 (ND), 119 to 121 (STS), Ser-124, and Gln-172. Gln-172 and His-180 together coordinate Zn(2+).

It belongs to the SIS family. GmhA subfamily. In terms of assembly, homotetramer. The cofactor is Zn(2+).

Its subcellular location is the cytoplasm. It catalyses the reaction 2 D-sedoheptulose 7-phosphate = D-glycero-alpha-D-manno-heptose 7-phosphate + D-glycero-beta-D-manno-heptose 7-phosphate. It participates in carbohydrate biosynthesis; D-glycero-D-manno-heptose 7-phosphate biosynthesis; D-glycero-alpha-D-manno-heptose 7-phosphate and D-glycero-beta-D-manno-heptose 7-phosphate from sedoheptulose 7-phosphate: step 1/1. The protein operates within bacterial outer membrane biogenesis; LPS core biosynthesis. In terms of biological role, catalyzes the isomerization of sedoheptulose 7-phosphate in D-glycero-D-manno-heptose 7-phosphate. This Photorhabdus laumondii subsp. laumondii (strain DSM 15139 / CIP 105565 / TT01) (Photorhabdus luminescens subsp. laumondii) protein is Phosphoheptose isomerase.